Reading from the N-terminus, the 65-residue chain is Large ribosomal subunit protein bL35 (65 aa).

The protein belongs to the bacterial ribosomal protein bL35 family.

The chain is Large ribosomal subunit protein bL35 from Erwinia tasmaniensis (strain DSM 17950 / CFBP 7177 / CIP 109463 / NCPPB 4357 / Et1/99).